The sequence spans 210 residues: Thymidylate kinase (210 aa).

Residue 9-16 coordinates ATP; it reads GLEGAGKS.

It belongs to the thymidylate kinase family.

The catalysed reaction is dTMP + ATP = dTDP + ADP. Functionally, phosphorylation of dTMP to form dTDP in both de novo and salvage pathways of dTTP synthesis. The polypeptide is Thymidylate kinase (Aliivibrio salmonicida (strain LFI1238) (Vibrio salmonicida (strain LFI1238))).